Reading from the N-terminus, the 201-residue chain is Ubiquitin-conjugating enzyme E2 E2 (201 aa).

Basic and acidic residues predominate over residues 1–10 (MSTEAQRVDD). Residues 1 to 55 (MSTEAQRVDDSPSTSGGSSDGDQRESVQQEPDREQVQPKKKEGKISSKTAAKLST) are disordered. The residue at position 2 (S2) is an N-acetylserine. Phosphoserine is present on residues S11, S15, S18, and S19. Over residues 21-45 (GDQRESVQQEPDREQVQPKKKEGKI) the composition is skewed to basic and acidic residues. Over residues 46-55 (SSKTAAKLST) the composition is skewed to low complexity. In terms of domain architecture, UBC core spans 55-201 (TSAKRIQKEL…ARQWTKRYAT (147 aa)). The active-site Glycyl thioester intermediate is the C139.

Belongs to the ubiquitin-conjugating enzyme family. Autoubiquitinated.

The catalysed reaction is S-ubiquitinyl-[E1 ubiquitin-activating enzyme]-L-cysteine + [E2 ubiquitin-conjugating enzyme]-L-cysteine = [E1 ubiquitin-activating enzyme]-L-cysteine + S-ubiquitinyl-[E2 ubiquitin-conjugating enzyme]-L-cysteine.. Its pathway is protein modification; protein ubiquitination. In terms of biological role, accepts ubiquitin from the E1 complex and catalyzes its covalent attachment to other proteins. In vitro catalyzes 'Lys-11'- and 'Lys-48'-, as well as 'Lys-63'-linked polyubiquitination. Catalyzes the ISGylation of influenza A virus NS1 protein. In Mus musculus (Mouse), this protein is Ubiquitin-conjugating enzyme E2 E2 (Ube2e2).